A 4830-amino-acid polypeptide reads, in one-letter code: Siderophore peptide synthetase fer3 (4830 aa).

The interval 197 to 623 (LDQAEKFPDR…LGRMNAEQVK (427 aa)) is adenylation 1. Residues 751–833 (ANEDPVTQAL…DLIPLLSDTT (83 aa)) form the Carrier 1 domain. S788 is subject to O-(pantetheine 4'-phosphoryl)serine. Residues 879–1317 (QKIFPTTATQ…HSLMREPETT (439 aa)) form a condensation 1 region. The adenylation 2 stretch occupies residues 1358–1781 (FENKAATEPE…IGRRDDLVKL (424 aa)). The Carrier 2 domain maps to 1929 to 2005 (GEDGDLQCQV…MLIRGLATKT (77 aa)). O-(pantetheine 4'-phosphoryl)serine is present on S1966. A condensation 2 region spans residues 2048 to 2503 (IPCSTLQEGM…LLDQVVSLLT (456 aa)). Positions 2573–2977 (AGTPETACIN…LGRRDEQEKI (405 aa)) are adenylation 3. In terms of domain architecture, Carrier 3 spans 3122–3198 (RPLSSLEREI…DIAAELSDSK (77 aa)). The residue at position 3159 (S3159) is an O-(pantetheine 4'-phosphoryl)serine. The condensation 3 stretch occupies residues 3232 to 3621 (KVLPCLPSQE…RDRDELRISA (390 aa)). One can recognise a Carrier 4 domain in the interval 3685 to 3760 (TAAEEQIRDL…GLSKLLDQRQ (76 aa)). The residue at position 3720 (S3720) is an O-(pantetheine 4'-phosphoryl)serine. Residues 3779–4199 (RYKATPLQAG…GVQIKAGASD (421 aa)) are condensation 4. Residues 4264 to 4340 (SLSTAEQDIV…RLTVATETRS (77 aa)) enclose the Carrier 5 domain. O-(pantetheine 4'-phosphoryl)serine is present on S4301. The condensation 5 stretch occupies residues 4381-4708 (VLPLLTGQQQ…DLVSRAEHQQ (328 aa)).

This sequence belongs to the NRP synthetase family.

It participates in siderophore biosynthesis. Its function is as follows. Nonribosomal peptide synthetase; part of the gene cluster that mediates the biosynthesis of siderophore ferrichrome A which is contributing to organismal virulence. The first step of ferrichrome A biosynthesis is performed by the HMG-CoA synthase hcs1 which catalyzes the generation of HMG-CoA and CoA using acetoacetyl-CoA and acetyl-CoA as substrates. The enoyl-CoA isomerase/hydratase fer4 then catalyzes the conversion of hcs1-produced HMG-CoA to methylglutaconyl-CoA. The acyltransferase fer5 then fuses the fer4-generated methylglutaconyl-CoA with sid1-generated hydroxyornithine to yield methylglutaconyl hydroxyornithine. Methylglutaconyl hydroxyornithine is then available for use by the NRPS fer3 to generate ferrichrome A. This is Siderophore peptide synthetase fer3 from Mycosarcoma maydis (Corn smut fungus).